The chain runs to 747 residues: H(+)/Cl(-) exchange transporter 4 (747 aa).

Positions 1-50 (MDFLDEPFPDVGTYEDFHTIDWLREKSRDTDRHRKITSKSKESIWEFIKS) are required for localization in the endoplasmic reticulum. The Cytoplasmic segment spans residues 1 to 54 (MDFLDEPFPDVGTYEDFHTIDWLREKSRDTDRHRKITSKSKESIWEFIKSLLDA). 2 helical membrane-spanning segments follow: residues 55-92 (WSGW…VCLS) and 138-161 (LNYL…VRVF). Positions 167-171 (GSGIP) match the Selectivity filter part_1 motif. Ser-168 lines the chloride pocket. The segment at residues 170 to 177 (IPEIKTIL) is an intramembrane region (helical). 2 helical membrane passes run 187–205 (GKWT…VSSG) and 211–230 (EGPL…SLFS). The Selectivity filter part_2 signature appears at 209–213 (GKEGP). 2 intramembrane regions (helical) span residues 242-254 (VLSA…VSVA) and 258-266 (PIGGVLFSL). 5 consecutive transmembrane segments (helical) span residues 278–296 (LWRS…RSIN), 320–345 (FPFI…AWCR), 352–372 (LGKY…IIAY), 429–449 (MWQL…TFGM), and 454–473 (GLFI…VGIG). The Selectivity filter part_3 motif lies at 454-458 (GLFIP). Phe-456 contributes to the chloride binding site. 2 intramembrane regions (helical) span residues 501–515 (GLYA…LGGV) and 519–530 (TVSLVVIMFELT). An intramembrane region (note=Loop between two helices) is located at residues 531 to 534 (GGLE). The helical transmembrane segment at 535 to 553 (YIVPLMAAAVTSKWVADAF) threads the bilayer. At 554–747 (GKEGIYEAHI…NQDPESIIFN (194 aa)) the chain is on the cytoplasmic side. Residue Tyr-559 participates in chloride binding. In terms of domain architecture, CBS 1 spans 587-653 (MRPRRGEPPL…AIKNARQRQE (67 aa)). ATP-binding positions include Ser-597 and 618–620 (YNG). The interval 654–683 (GIVSNSIMYFTEEPPELPANSPHPLKLRRI) is required for localization in the endoplasmic reticulum. The 59-residue stretch at 684 to 742 (LNLSPFTVTDHTPMETVVDIFRKLGLRQCLVTRSGRLLGIITKKDVLRHMAQMANQDPE) folds into the CBS 2 domain. 725–728 (TKKD) is a binding site for ATP.

The protein belongs to the chloride channel (TC 2.A.49) family. ClC-4/CLCN4 subfamily. Strongly expressed in liver and brain, but also in heart, muscle, kidney and spleen.

Its subcellular location is the early endosome membrane. It localises to the late endosome membrane. It is found in the endoplasmic reticulum membrane. The protein resides in the lysosome membrane. The protein localises to the recycling endosome membrane. Its function is as follows. Strongly outwardly rectifying, electrogenic H(+)/Cl(-)exchanger which mediates the exchange of chloride ions against protons. The CLC channel family contains both chloride channels and proton-coupled anion transporters that exchange chloride or another anion for protons. The presence of conserved gating glutamate residues is typical for family members that function as antiporters. This Rattus norvegicus (Rat) protein is H(+)/Cl(-) exchange transporter 4 (Clcn4).